The chain runs to 110 residues: Cation efflux system protein CusF (110 aa).

The N-terminal stretch at 1-21 is a signal peptide; the sequence is MKKALQVAMFSLFTVIGFNAQ.

As to quaternary structure, the cus efflux system is composed of CusA, CusB, CusC and CusF. Interacts with copper-exporting P-type ATPase CopA; when this protein is precharged with copper it binds very little CopA.

It localises to the periplasm. Functionally, part of a cation efflux system that mediates resistance to copper and silver. Binds one copper per polypeptide. The protein is Cation efflux system protein CusF (cusF) of Escherichia coli (strain K12).